Consider the following 75-residue polypeptide: MSRFFRRRKFCRFTAEGATSIDYKDIATLKNYITESGKIVPSRITGTAAKYQRQLTRAIKRARYLSLLPYTDLHK.

It belongs to the bacterial ribosomal protein bS18 family. As to quaternary structure, part of the 30S ribosomal subunit. Forms a tight heterodimer with protein bS6.

In terms of biological role, binds as a heterodimer with protein bS6 to the central domain of the 16S rRNA, where it helps stabilize the platform of the 30S subunit. The sequence is that of Small ribosomal subunit protein bS18 from Colwellia psychrerythraea (strain 34H / ATCC BAA-681) (Vibrio psychroerythus).